Here is a 414-residue protein sequence, read N- to C-terminus: Mannan endo-1,4-beta-mannosidase 3 (414 aa).

An N-terminal signal peptide occupies residues 1–19 (MKCLCFVVLLAILIAQNSS). 2 N-linked (GlcNAc...) asparagine glycosylation sites follow: Asn17 and Asn75. Trp87 lines the substrate pocket. 2 N-linked (GlcNAc...) asparagine glycosylation sites follow: Asn133 and Asn153. Position 202 (Asn202) interacts with substrate. Glu203 acts as the Proton donor in catalysis. Residue Tyr283 participates in substrate binding. Residue Glu323 is the Nucleophile of the active site. N-linked (GlcNAc...) asparagine glycosylation occurs at Asn343. Trp365 provides a ligand contact to substrate. N-linked (GlcNAc...) asparagine glycosylation is present at Asn386.

The protein belongs to the glycosyl hydrolase 5 (cellulase A) family. In terms of tissue distribution, expressed in leaves, flowers, siliques and seeds.

It is found in the secreted. It carries out the reaction Random hydrolysis of (1-&gt;4)-beta-D-mannosidic linkages in mannans, galactomannans and glucomannans.. The protein is Mannan endo-1,4-beta-mannosidase 3 (MAN3) of Arabidopsis thaliana (Mouse-ear cress).